The sequence spans 730 residues: ABC transporter G family member 20 (730 aa).

Positions 15–244 constitute an ABC transporter domain; sequence ISLKNVCRGY…YESQTLEEVF (230 aa). Residue 47-54 participates in ATP binding; that stretch reads GASGSGKT. Residues 281 to 303 form a disordered region; the sequence is VNNNNNNNNNNNNNNYNNNDDEE. Positions 282–298 are enriched in low complexity; the sequence is NNNNNNNNNNNNNNYNN. One can recognise an ABC transmembrane type-2 domain in the interval 489-717; the sequence is SFETLAKQQA…FIAVLALNEK (229 aa). The next 5 membrane-spanning stretches (helical) occupy residues 520-540, 572-592, 602-622, 634-654, and 692-712; these read FIDF…AISI, FLGH…IAIY, IALV…LGLV, IQLS…LWPL, and VWVA…IAVL.

Belongs to the ABC transporter superfamily.

It localises to the membrane. This is ABC transporter G family member 20 (abcG20) from Dictyostelium discoideum (Social amoeba).